A 98-amino-acid chain; its full sequence is Hainantoxin-XVII (98 aa).

The signal sequence occupies residues 1–40; sequence MTTVGVSLFRRSPEKITMKIATFLGLSFLLIASYVLICEA. The propeptide occupies 41-64; it reads QHPGFQELLILEENMRDPENSKER. 3 disulfide bridges follow: cysteine 66–cysteine 81, cysteine 73–cysteine 85, and cysteine 80–cysteine 95.

The protein belongs to the hainantoxin family. 17 subfamily. As to expression, expressed by the venom gland.

The protein resides in the secreted. Putative ion channel inhibitor. The protein is Hainantoxin-XVII of Cyriopagopus hainanus (Chinese bird spider).